The sequence spans 223 residues: DNA mismatch repair protein MutH (223 aa).

It belongs to the MutH family.

Its subcellular location is the cytoplasm. Functionally, sequence-specific endonuclease that cleaves unmethylated GATC sequences. It is involved in DNA mismatch repair. This chain is DNA mismatch repair protein MutH, found in Haemophilus influenzae (strain 86-028NP).